A 348-amino-acid chain; its full sequence is Growth-regulating factor 5 (348 aa).

Residues Val24–Pro59 enclose the QLQ domain. Short sequence motifs (bipartite nuclear localization signal) lie at residues Lys94–Arg112 and Arg130–Lys137. In terms of domain architecture, WRC spans Asp97–Ser141. Disordered regions lie at residues Glu125–Asp165 and Leu306–Asp348. A compositionally biased stretch (basic residues) spans His127–Arg136. Residues Pro148–Thr161 show a composition bias toward polar residues. Positions Leu306–Trp320 are enriched in basic and acidic residues. Over residues Asn329–Ile340 the composition is skewed to polar residues.

This sequence belongs to the GRF family.

The protein resides in the nucleus. Transcription activator that plays a regulatory role in gibberellin-induced stem elongation. The sequence is that of Growth-regulating factor 5 (GRF5) from Oryza sativa subsp. japonica (Rice).